Consider the following 401-residue polypeptide: MSRVSQARNLGKYFLLIDNMLVVLGFFVVFPLVSIRFVDQMGWAAVMVGIALGLRQFIQQGLGIFGGAIADRFGAKPMIVTGMLMRAAGFATMGIAHEPWLLWFSCLLSGLGGTLFDPPRSALVVKLMPQQRGRFFSLLMMQDSAGAVIGALLGSWLLQYDFRLVCATGAVLFVLCAAFNAWLLPAWKLSTIRTPVREGMTRVMRDKRFVTYVLTLAGYYMLAVQVMLMLPIMVNDVAGAPSAVKWMYAIEACLSLTLLYPIARWSEKHFRLEHRLMAGLLIMSLSMMPVGMVSGLQQLFTLICLFYIGSIIAEPARETLSASLADARARGSYMGFSRLGLAIGGTIGYIGGGWLFDLGKSAHQPELPWMMLGIIGIFTFLALGWQFSQKRAARRLLERDA.

The Cytoplasmic portion of the chain corresponds to 1–12; the sequence is MSRVSQARNLGK. Residues 13 to 33 traverse the membrane as a helical segment; the sequence is YFLLIDNMLVVLGFFVVFPLV. The Periplasmic portion of the chain corresponds to 34-98; the sequence is SIRFVDQMGW…GFATMGIAHE (65 aa). A helical membrane pass occupies residues 99–116; the sequence is PWLLWFSCLLSGLGGTLF. Residues 117–137 lie on the Cytoplasmic side of the membrane; that stretch reads DPPRSALVVKLMPQQRGRFFS. Residues 138 to 158 traverse the membrane as a helical segment; sequence LLMMQDSAGAVIGALLGSWLL. Residues 159–163 lie on the Periplasmic side of the membrane; the sequence is QYDFR. The chain crosses the membrane as a helical span at residues 164–184; it reads LVCATGAVLFVLCAAFNAWLL. Topologically, residues 185 to 212 are cytoplasmic; the sequence is PAWKLSTIRTPVREGMTRVMRDKRFVTY. A helical transmembrane segment spans residues 213 to 233; that stretch reads VLTLAGYYMLAVQVMLMLPIM. Over 234-242 the chain is Periplasmic; the sequence is VNDVAGAPS. The chain crosses the membrane as a helical span at residues 243-263; that stretch reads AVKWMYAIEACLSLTLLYPIA. The Cytoplasmic segment spans residues 264–275; that stretch reads RWSEKHFRLEHR. The helical transmembrane segment at 276–296 threads the bilayer; it reads LMAGLLIMSLSMMPVGMVSGL. Topologically, residues 297–298 are periplasmic; the sequence is QQ. A helical membrane pass occupies residues 299-319; the sequence is LFTLICLFYIGSIIAEPARET. The Cytoplasmic segment spans residues 320–338; sequence LSASLADARARGSYMGFSR. The chain crosses the membrane as a helical span at residues 339–359; that stretch reads LGLAIGGTIGYIGGGWLFDLG. At 360-366 the chain is on the periplasmic side; sequence KSAHQPE. The helical transmembrane segment at 367–387 threads the bilayer; sequence LPWMMLGIIGIFTFLALGWQF. Over 388-401 the chain is Cytoplasmic; it reads SQKRAARRLLERDA.

Belongs to the major facilitator superfamily. DHA1 family. MdtH (TC 2.A.1.2.21) subfamily.

The protein localises to the cell inner membrane. The protein is Multidrug resistance protein MdtH of Shigella dysenteriae serotype 1 (strain Sd197).